Consider the following 395-residue polypeptide: Succinyl-diaminopimelate desuccinylase (395 aa).

Residue His-81 coordinates Zn(2+). The active site involves Asp-83. Asp-114 lines the Zn(2+) pocket. The active-site Proton acceptor is the Glu-146. Zn(2+) is bound by residues Glu-147, Glu-175, and His-364.

It belongs to the peptidase M20A family. DapE subfamily. In terms of assembly, homodimer. Zn(2+) is required as a cofactor. Requires Co(2+) as cofactor.

It catalyses the reaction N-succinyl-(2S,6S)-2,6-diaminopimelate + H2O = (2S,6S)-2,6-diaminopimelate + succinate. Its pathway is amino-acid biosynthesis; L-lysine biosynthesis via DAP pathway; LL-2,6-diaminopimelate from (S)-tetrahydrodipicolinate (succinylase route): step 3/3. In terms of biological role, catalyzes the hydrolysis of N-succinyl-L,L-diaminopimelic acid (SDAP), forming succinate and LL-2,6-diaminopimelate (DAP), an intermediate involved in the bacterial biosynthesis of lysine and meso-diaminopimelic acid, an essential component of bacterial cell walls. The chain is Succinyl-diaminopimelate desuccinylase from Parvibaculum lavamentivorans (strain DS-1 / DSM 13023 / NCIMB 13966).